The following is an 84-amino-acid chain: M-zodatoxin-Lt2a (84 aa).

The first 22 residues, 1 to 22 (MKYFVIALALAVALVCIAESTA), serve as a signal peptide directing secretion. The propeptide occupies 23–58 (YEVNEELENELDDLDDAAWLAVAEELQGLEDFEESR). Residues 55–58 (EESR) carry the Processing quadruplet motif motif.

Cleavage of the propeptide depends on the processing quadruplet motif (XXXR, with at least one of X being E). In terms of tissue distribution, expressed by the venom gland.

The protein localises to the secreted. It has antimicrobial activity against Gram-positive bacteria (A.globiformis VKM Ac-1112 (MIC=0.7 uM), and B.subtilis VKM B-501 (MIC=0.4 uM)), Gram-negative bacteria (E.coli DH5-alpha (MIC=1.0 uM), E.coli MH1 (MIC=0.7 uM), and P.aeruginosa PAO1 (MIC=6.7 uM)), and yeasts (P.pastoris GS115 (MIC=6.7 uM), and S.cerevisiae Y190 (MIC=54 uM)). Also has a strong hemolytic activity against rabbit erythrocytes. Causes paralysis, but is not lethal when injected into insect (M.domestica) larvae. This chain is M-zodatoxin-Lt2a, found in Lachesana tarabaevi (Spider).